Consider the following 419-residue polypeptide: Protein FAM181B (419 aa).

Residues 107–157 (LMGAAPPGPSSPGAADTPAKRPLAGAQTVPVPVPAHGKAAPRREASQAAAA) form a disordered region.

This sequence belongs to the FAM181 family.

The protein is Protein FAM181B (FAM181B) of Bos taurus (Bovine).